Here is a 387-residue protein sequence, read N- to C-terminus: Phosphoglycerate kinase (387 aa).

Substrate-binding positions include 21–23, Arg-36, 60–63, Arg-114, and Arg-147; these read DLN and HLGR. ATP is bound by residues Lys-198, Glu-313, and 339-342; that span reads GGDT.

The protein belongs to the phosphoglycerate kinase family. Monomer.

It localises to the cytoplasm. It carries out the reaction (2R)-3-phosphoglycerate + ATP = (2R)-3-phospho-glyceroyl phosphate + ADP. It functions in the pathway carbohydrate degradation; glycolysis; pyruvate from D-glyceraldehyde 3-phosphate: step 2/5. This chain is Phosphoglycerate kinase, found in Baumannia cicadellinicola subsp. Homalodisca coagulata.